The following is a 178-amino-acid chain: Translation initiation factor IF-3 (178 aa).

Residues 1-20 (MRRPFKAAAPTKDGPRSNRD) form a disordered region.

Belongs to the IF-3 family. In terms of assembly, monomer.

Its subcellular location is the cytoplasm. Functionally, IF-3 binds to the 30S ribosomal subunit and shifts the equilibrium between 70S ribosomes and their 50S and 30S subunits in favor of the free subunits, thus enhancing the availability of 30S subunits on which protein synthesis initiation begins. The chain is Translation initiation factor IF-3 from Mesorhizobium japonicum (strain LMG 29417 / CECT 9101 / MAFF 303099) (Mesorhizobium loti (strain MAFF 303099)).